Consider the following 430-residue polypeptide: Serine hydroxymethyltransferase (430 aa).

120–122 is a (6S)-5,6,7,8-tetrahydrofolate binding site; sequence GHI. K226 is subject to N6-(pyridoxal phosphate)lysine.

Belongs to the SHMT family. In terms of assembly, homodimer. It depends on pyridoxal 5'-phosphate as a cofactor.

It localises to the cytoplasm. The protein operates within amino-acid biosynthesis; glycine biosynthesis; glycine from L-serine: step 1/1. Catalyzes the reversible interconversion of serine and glycine with a modified folate serving as the one-carbon carrier. Also exhibits a pteridine-independent aldolase activity toward beta-hydroxyamino acids, producing glycine and aldehydes, via a retro-aldol mechanism. The sequence is that of Serine hydroxymethyltransferase from Pyrobaculum calidifontis (strain DSM 21063 / JCM 11548 / VA1).